Reading from the N-terminus, the 328-residue chain is 6-phosphogluconolactonase (328 aa).

This sequence belongs to the cycloisomerase 2 family.

It catalyses the reaction 6-phospho-D-glucono-1,5-lactone + H2O = 6-phospho-D-gluconate + H(+). The protein operates within carbohydrate degradation; pentose phosphate pathway; D-ribulose 5-phosphate from D-glucose 6-phosphate (oxidative stage): step 2/3. Functionally, catalyzes the hydrolysis of 6-phosphogluconolactone to 6-phosphogluconate. In Photorhabdus laumondii subsp. laumondii (strain DSM 15139 / CIP 105565 / TT01) (Photorhabdus luminescens subsp. laumondii), this protein is 6-phosphogluconolactonase.